Here is a 418-residue protein sequence, read N- to C-terminus: ORC1-type DNA replication protein 2 (418 aa).

ATP-binding positions include Thr72–Val76, Tyr218, and Arg230.

Belongs to the CDC6/cdc18 family.

Functionally, involved in regulation of DNA replication. This Sulfurisphaera tokodaii (strain DSM 16993 / JCM 10545 / NBRC 100140 / 7) (Sulfolobus tokodaii) protein is ORC1-type DNA replication protein 2 (cdc6-2).